Here is a 342-residue protein sequence, read N- to C-terminus: DNA primase small subunit PriS (342 aa).

Active-site residues include D97, D99, and D236.

The protein belongs to the eukaryotic-type primase small subunit family. As to quaternary structure, heterodimer of a small subunit (PriS) and a large subunit (PriL). It depends on Mg(2+) as a cofactor. Mn(2+) serves as cofactor.

Catalytic subunit of DNA primase, an RNA polymerase that catalyzes the synthesis of short RNA molecules used as primers for DNA polymerase during DNA replication. The small subunit contains the primase catalytic core and has DNA synthesis activity on its own. Binding to the large subunit stabilizes and modulates the activity, increasing the rate of DNA synthesis while decreasing the length of the DNA fragments, and conferring RNA synthesis capability. The DNA polymerase activity may enable DNA primase to also catalyze primer extension after primer synthesis. May also play a role in DNA repair. The polypeptide is DNA primase small subunit PriS (Aeropyrum pernix (strain ATCC 700893 / DSM 11879 / JCM 9820 / NBRC 100138 / K1)).